The sequence spans 485 residues: Aspartyl/glutamyl-tRNA(Asn/Gln) amidotransferase subunit B (485 aa).

Belongs to the GatB/GatE family. GatB subfamily. As to quaternary structure, heterotrimer of A, B and C subunits.

It carries out the reaction L-glutamyl-tRNA(Gln) + L-glutamine + ATP + H2O = L-glutaminyl-tRNA(Gln) + L-glutamate + ADP + phosphate + H(+). It catalyses the reaction L-aspartyl-tRNA(Asn) + L-glutamine + ATP + H2O = L-asparaginyl-tRNA(Asn) + L-glutamate + ADP + phosphate + 2 H(+). Allows the formation of correctly charged Asn-tRNA(Asn) or Gln-tRNA(Gln) through the transamidation of misacylated Asp-tRNA(Asn) or Glu-tRNA(Gln) in organisms which lack either or both of asparaginyl-tRNA or glutaminyl-tRNA synthetases. The reaction takes place in the presence of glutamine and ATP through an activated phospho-Asp-tRNA(Asn) or phospho-Glu-tRNA(Gln). In Methylacidiphilum infernorum (isolate V4) (Methylokorus infernorum (strain V4)), this protein is Aspartyl/glutamyl-tRNA(Asn/Gln) amidotransferase subunit B.